The sequence spans 260 residues: Uroplakin-1b (260 aa).

The Cytoplasmic segment spans residues 2-15 (AKDDSTVRCFQGLL). A helical membrane pass occupies residues 16-36 (IFGNVIIGMCSIALMAECIFF). Residues 37–60 (VSDQNSLYPLLEATNNDDIYAAAW) are Extracellular-facing. The chain crosses the membrane as a helical span at residues 61–81 (IGMFVGICLFCLSVLGIVGIM). The Cytoplasmic segment spans residues 82 to 86 (KSNRK). A helical transmembrane segment spans residues 87–107 (ILLVYFILMFIVYAFEVASCI). Over 108-229 (TAATQRDFFT…ELISGPMNRH (122 aa)) the chain is Extracellular. A helical membrane pass occupies residues 230–250 (AWGVAWFGFAILCWTFWVLLG). At 251–260 (TMFYWSRIDY) the chain is on the cytoplasmic side.

It belongs to the tetraspanin (TM4SF) family. As to quaternary structure, heterodimer with uroplakin-3A (UPK3A) or uroplakin-3B (UPK3B). In terms of processing, N-glycosylated with high-mannose oligosaccharides. As to expression, bladder epithelium.

It localises to the membrane. In terms of biological role, component of the asymmetric unit membrane (AUM); a highly specialized biomembrane elaborated by terminally differentiated urothelial cells. May play an important role in normal bladder epithelial physiology, possibly in regulating membrane permeability of superficial umbrella cells or in stabilizing the apical membrane through AUM/cytoskeletal interactions. This Bos taurus (Bovine) protein is Uroplakin-1b (UPK1B).